A 323-amino-acid polypeptide reads, in one-letter code: Oligodendrocyte transcription factor 2 (323 aa).

Residues 1–13 (MDSDASLVSSRPS) show a composition bias toward polar residues. The tract at residues 1 to 107 (MDSDASLVSS…KKQMTEPELQ (107 aa)) is disordered. The span at 77–93 (SSSSSTSSSTSSAATSS) shows a compositional bias: low complexity. Residues 108 to 162 (QLRLKINSRERKRMHDLNIAMDGLREVMPYAHGPSVRKLSKIATLLLARNYILML) form the bHLH domain.

In terms of assembly, interacts with NKX2-2. Interacts with ZNF488. Expressed specifically in the brain.

The protein resides in the nucleus. The protein localises to the cytoplasm. In terms of biological role, required for oligodendrocyte and motor neuron specification in the spinal cord, as well as for the development of somatic motor neurons in the hindbrain. Functions together with ZNF488 to promote oligodendrocyte differentiation. Cooperates with OLIG1 to establish the pMN domain of the embryonic neural tube. Antagonist of V2 interneuron and of NKX2-2-induced V3 interneuron development. This chain is Oligodendrocyte transcription factor 2 (Olig2), found in Mus musculus (Mouse).